Reading from the N-terminus, the 458-residue chain is MARFLLGAAAIALLAGVSSLLLMVPFAEAYDPLDPNGNITIKWDITQWTPDGYVAVVTIYNFQKYRHIQAPGWSLGWAWAKKEIIWSMAGGQATEQGDCSAFKANIPHCCKRDPRVVDLVPGAPYNMQFGNCCKGGVLTSWVQDPLNAVASFQITVGHSGTSNKTVKAPKNFTLKAPGPGYSCGLAQEVKPPTRFISLDGRRTTQAHVTWNVTCTYSQFVAQRAPTCCVSLSSFYNETIVNCPKCACGCQNKKPGSCVEGNSPYLASVVNGPGKGSLTPLVQCTPHMCPIRVHWHVKLNYRDYWRVKVTITNWNYRMNYSQWNLVVQHPNFENVSTVFSFNYKSLNPYGVINDTAMMWGVKYYNDLLMVAGPDGNVQSELLFRKDRSTFTFDKGWAFPRRIYFNGESCVMPSPDLYPWLPPSSTPRFRTVFLLMSFLVCGTLAFLHNHLVLDKNCGKC.

The signal sequence occupies residues 1 to 29 (MARFLLGAAAIALLAGVSSLLLMVPFAEA). N-linked (GlcNAc...) asparagine glycans are attached at residues Asn-38, Asn-163, Asn-171, Asn-211, Asn-236, Asn-318, Asn-333, and Asn-352. A helical membrane pass occupies residues 430 to 450 (VFLLMSFLVCGTLAFLHNHLV).

Belongs to the COBRA family.

Its subcellular location is the membrane. The polypeptide is COBRA-like protein 2 (BC1L2) (Oryza sativa subsp. japonica (Rice)).